The following is a 703-amino-acid chain: Fatty acid oxidation complex subunit alpha (703 aa).

The enoyl-CoA hydratase stretch occupies residues 1 to 190; the sequence is MSEQKAFSLN…KLGVVDACVP (190 aa). Positions 308 to 703 are 3-hydroxyacyl-CoA dehydrogenase; it reads AAVKKVGVLG…TRAGEGRTFY (396 aa).

This sequence in the N-terminal section; belongs to the enoyl-CoA hydratase/isomerase family. It in the central section; belongs to the 3-hydroxyacyl-CoA dehydrogenase family. Heterotetramer of two alpha chains (FadJ) and two beta chains (FadI).

Its subcellular location is the cytoplasm. The enzyme catalyses a (3S)-3-hydroxyacyl-CoA = a (2E)-enoyl-CoA + H2O. The catalysed reaction is a 4-saturated-(3S)-3-hydroxyacyl-CoA = a (3E)-enoyl-CoA + H2O. It catalyses the reaction a (3S)-3-hydroxyacyl-CoA + NAD(+) = a 3-oxoacyl-CoA + NADH + H(+). It carries out the reaction (3S)-3-hydroxybutanoyl-CoA = (3R)-3-hydroxybutanoyl-CoA. It functions in the pathway lipid metabolism; fatty acid beta-oxidation. Catalyzes the formation of a hydroxyacyl-CoA by addition of water on enoyl-CoA. Also exhibits 3-hydroxyacyl-CoA epimerase and 3-hydroxyacyl-CoA dehydrogenase activities. The polypeptide is Fatty acid oxidation complex subunit alpha (Vibrio parahaemolyticus serotype O3:K6 (strain RIMD 2210633)).